We begin with the raw amino-acid sequence, 315 residues long: Methionyl-tRNA formyltransferase (315 aa).

113–116 (SLLP) provides a ligand contact to (6S)-5,6,7,8-tetrahydrofolate.

The protein belongs to the Fmt family.

The catalysed reaction is L-methionyl-tRNA(fMet) + (6R)-10-formyltetrahydrofolate = N-formyl-L-methionyl-tRNA(fMet) + (6S)-5,6,7,8-tetrahydrofolate + H(+). Its function is as follows. Attaches a formyl group to the free amino group of methionyl-tRNA(fMet). The formyl group appears to play a dual role in the initiator identity of N-formylmethionyl-tRNA by promoting its recognition by IF2 and preventing the misappropriation of this tRNA by the elongation apparatus. This is Methionyl-tRNA formyltransferase from Shigella boydii serotype 18 (strain CDC 3083-94 / BS512).